The following is a 138-amino-acid chain: Nucleoside diphosphate kinase (138 aa).

ATP is bound by residues Lys11, Phe59, Arg87, Thr93, Arg104, and Asn114. Catalysis depends on His117, which acts as the Pros-phosphohistidine intermediate.

The protein belongs to the NDK family. It depends on Mg(2+) as a cofactor.

It localises to the cytoplasm. The catalysed reaction is a 2'-deoxyribonucleoside 5'-diphosphate + ATP = a 2'-deoxyribonucleoside 5'-triphosphate + ADP. It catalyses the reaction a ribonucleoside 5'-diphosphate + ATP = a ribonucleoside 5'-triphosphate + ADP. In terms of biological role, major role in the synthesis of nucleoside triphosphates other than ATP. The ATP gamma phosphate is transferred to the NDP beta phosphate via a ping-pong mechanism, using a phosphorylated active-site intermediate. This Saccharolobus solfataricus (strain ATCC 35092 / DSM 1617 / JCM 11322 / P2) (Sulfolobus solfataricus) protein is Nucleoside diphosphate kinase.